The chain runs to 1062 residues: Valine--tRNA ligase, mitochondrial (1062 aa).

The N-terminal 15 residues, Met1–Gly15, are a transit peptide targeting the mitochondrion. Positions Met1–Thr73 are disordered. Over residues Arg42 to Ala56 the composition is skewed to basic and acidic residues. The 'HIGH' region motif lies at Pro146–His156. The 'KMSKS' region motif lies at Lys659–Ser663. Residue Lys662 coordinates ATP.

Belongs to the class-I aminoacyl-tRNA synthetase family.

Its subcellular location is the mitochondrion. The catalysed reaction is tRNA(Val) + L-valine + ATP = L-valyl-tRNA(Val) + AMP + diphosphate. Catalyzes the attachment of valine to tRNA(Val) in a two-step reaction: valine is first activated by ATP to form Val-AMP and then transferred to the acceptor end of tRNA(Val). This chain is Valine--tRNA ligase, mitochondrial (VARS2), found in Sus scrofa (Pig).